A 582-amino-acid polypeptide reads, in one-letter code: Proline--tRNA ligase (582 aa).

It belongs to the class-II aminoacyl-tRNA synthetase family. ProS type 1 subfamily. In terms of assembly, homodimer.

The protein resides in the cytoplasm. It catalyses the reaction tRNA(Pro) + L-proline + ATP = L-prolyl-tRNA(Pro) + AMP + diphosphate. Catalyzes the attachment of proline to tRNA(Pro) in a two-step reaction: proline is first activated by ATP to form Pro-AMP and then transferred to the acceptor end of tRNA(Pro). As ProRS can inadvertently accommodate and process non-cognate amino acids such as alanine and cysteine, to avoid such errors it has two additional distinct editing activities against alanine. One activity is designated as 'pretransfer' editing and involves the tRNA(Pro)-independent hydrolysis of activated Ala-AMP. The other activity is designated 'posttransfer' editing and involves deacylation of mischarged Ala-tRNA(Pro). The misacylated Cys-tRNA(Pro) is not edited by ProRS. This Mycobacterium tuberculosis (strain CDC 1551 / Oshkosh) protein is Proline--tRNA ligase.